We begin with the raw amino-acid sequence, 1038 residues long: Translation initiation factor IF-2 (1038 aa).

Residues 48 to 426 (DALQGPGGNA…RQRRQEYEAM (379 aa)) are disordered. The span at 58–87 (GKSAAKPGAPRKAAPAKPAAPSPAAAARPA) shows a compositional bias: low complexity. Over residues 88-99 (APKPGAPAPKPA) the composition is skewed to pro residues. Residues 100-114 (EAPSSTPAAPSAPSA) show a composition bias toward low complexity. The span at 115–125 (GPRPGPKPAPK) shows a compositional bias: pro residues. Positions 126-141 (AAPVTPVPAAEFSAPA) are enriched in low complexity. A compositionally biased stretch (pro residues) spans 142–153 (PAQPAAPQPQAP). The span at 177-199 (DGGRDGGQRDGGRGGERGGDRPA) shows a compositional bias: basic and acidic residues. The span at 200 to 219 (RPAGQGAPRPGGARPAGPRP) shows a compositional bias: low complexity. Positions 261-277 (SGPGGAPRPQGGQGQGG) are enriched in gly residues. Positions 299-315 (GNRPNPGMMPQRPAAGP) are enriched in low complexity. The segment covering 319–406 (PGGGGRGPGG…GTQGAFGRPG (88 aa)) has biased composition (gly residues). Residues 410 to 419 (RRGRKSKRQR) show a composition bias toward basic residues. Positions 531 to 703 (SRPPVVTVMG…VVLTADASLD (173 aa)) constitute a tr-type G domain. The interval 540-547 (GHVDHGKT) is G1. 540-547 (GHVDHGKT) serves as a coordination point for GTP. A G2 region spans residues 565-569 (GITQH). The segment at 590–593 (DTPG) is G3. GTP is bound by residues 590–594 (DTPGH) and 644–647 (NKID). A G4 region spans residues 644–647 (NKID). The tract at residues 680–682 (SAK) is G5.

The protein belongs to the TRAFAC class translation factor GTPase superfamily. Classic translation factor GTPase family. IF-2 subfamily.

It localises to the cytoplasm. In terms of biological role, one of the essential components for the initiation of protein synthesis. Protects formylmethionyl-tRNA from spontaneous hydrolysis and promotes its binding to the 30S ribosomal subunits. Also involved in the hydrolysis of GTP during the formation of the 70S ribosomal complex. This chain is Translation initiation factor IF-2, found in Streptomyces griseus subsp. griseus (strain JCM 4626 / CBS 651.72 / NBRC 13350 / KCC S-0626 / ISP 5235).